Here is a 212-residue protein sequence, read N- to C-terminus: Putative inactive 6-phospho-alpha-glucosidase (212 aa).

4–70 serves as a coordination point for NAD(+); the sequence is FSVVVAGGGS…PDIAFSYTTD (67 aa). Mn(2+) is bound by residues Cys-169 and His-200.

Belongs to the glycosyl hydrolase 4 family.

This is Putative inactive 6-phospho-alpha-glucosidase from Escherichia coli (strain K12).